The primary structure comprises 50 residues: Photosystem I reaction center subunit IX (50 aa).

Residues 7–27 (YLSTAPVLAILCCSFLAGLVI) form a helical membrane-spanning segment.

It belongs to the PsaJ family.

Its subcellular location is the plastid. The protein localises to the chloroplast thylakoid membrane. Its function is as follows. May help in the organization of the PsaE and PsaF subunits. The chain is Photosystem I reaction center subunit IX from Pinus koraiensis (Korean pine).